The chain runs to 256 residues: Trans-aconitate 2-methyltransferase (256 aa).

Belongs to the methyltransferase superfamily. Tam family.

Its subcellular location is the cytoplasm. The enzyme catalyses trans-aconitate + S-adenosyl-L-methionine = (E)-3-(methoxycarbonyl)pent-2-enedioate + S-adenosyl-L-homocysteine. Catalyzes the S-adenosylmethionine monomethyl esterification of trans-aconitate. The chain is Trans-aconitate 2-methyltransferase from Rhodopseudomonas palustris (strain HaA2).